Here is a 308-residue protein sequence, read N- to C-terminus: Homeobox protein abdominal-A homolog (308 aa).

The segment at residues 138–197 is a DNA-binding region (homeobox); that stretch reads RRRGRQTYTRFQTLELEKEFHFNHYLTRRRRIEIAHALCLTERQIKIWFQNRRMKLKKEL. Basic and acidic residues predominate over residues 207–221; that stretch reads ARREREEQDKMKNES. The segment at 207-277 is disordered; that stretch reads ARREREEQDK…SGNLGSHLHH (71 aa). The segment covering 223 to 247 has biased composition (low complexity); sequence KSAQQHHSQKQAQQEHTVVGSQQTS. A compositionally biased stretch (gly residues) spans 248–269; sequence NGGGTGGGTGGSGGAGSGGSSG.

The protein belongs to the Antp homeobox family.

It localises to the nucleus. In terms of biological role, sequence-specific transcription factor which is part of a developmental regulatory system that provides cells with specific positional identities on the anterior-posterior axis. The sequence is that of Homeobox protein abdominal-A homolog from Anopheles gambiae (African malaria mosquito).